Here is a 446-residue protein sequence, read N- to C-terminus: Exodeoxyribonuclease 7 large subunit (446 aa).

This sequence belongs to the XseA family. As to quaternary structure, heterooligomer composed of large and small subunits.

Its subcellular location is the cytoplasm. The enzyme catalyses Exonucleolytic cleavage in either 5'- to 3'- or 3'- to 5'-direction to yield nucleoside 5'-phosphates.. Functionally, bidirectionally degrades single-stranded DNA into large acid-insoluble oligonucleotides, which are then degraded further into small acid-soluble oligonucleotides. This is Exodeoxyribonuclease 7 large subunit from Streptococcus thermophilus (strain ATCC BAA-250 / LMG 18311).